Here is a 557-residue protein sequence, read N- to C-terminus: MKDPRHDDQREIRAPRGSELNAKSWLTEAPLRMLMNNLDPEVAEHPKSLVVYGGIGRAARDWECFDKIVEVLKRLEDDETLLVQSGKPVGVFKTHADAPRVLIANSNLVPHWANWEHFNELDKKGLMMYGQMTAGSWIYIGSQGIVQGTYETFVSVAKQHFNGEAHGRWILTGGLGGMGGAQPLAATMAGFCMLAVDCDPSRIEFRLRTRYLDKQAKDLDDALAMIENAKKTGEAISIGLLGNAADVYAELVKRGVTPDVVTDQTSAHDPLNGYLPQGWTMEHAAEMRLKDPAAVVKAAKQSMAVQVQAMLALQEAGAATLDYGNNIRQMALEEGVKNAFDFPGFVPAYIRPLFCEGVGPFRWAALSGDPEDIYKTDAKVKELIPDNPHLHNWLDMARERISFQGLPARICWVGLKDRARLGLAFNEMVRNGELKAPVVIGRDHLDSGSVASPNRETESMMDGSDAVSDWPLLNAMLNVAGGATWVSLHHGGGVGMGFSQHSGVVIVCDGSEAADQRIARVLRNDPGTGVMRHADAGYDIARNCAKENGLDLPMLKD.

NAD(+) is bound by residues 53 to 54 (GG), glutamine 131, 177 to 179 (GMG), aspartate 197, arginine 202, 243 to 244 (NA), 264 to 268 (QTSAH), 274 to 275 (YL), and tyrosine 323. Residue cysteine 411 is part of the active site. Residue glycine 493 coordinates NAD(+).

It belongs to the urocanase family. The cofactor is NAD(+).

Its subcellular location is the cytoplasm. It carries out the reaction 4-imidazolone-5-propanoate = trans-urocanate + H2O. It participates in amino-acid degradation; L-histidine degradation into L-glutamate; N-formimidoyl-L-glutamate from L-histidine: step 2/3. Its function is as follows. Catalyzes the conversion of urocanate to 4-imidazolone-5-propionate. This Hahella chejuensis (strain KCTC 2396) protein is Urocanate hydratase.